The chain runs to 369 residues: Putative 2-aminoethylphosphonate import ATP-binding protein PhnT (369 aa).

In terms of domain architecture, ABC transporter spans 19 to 250; it reads IVLDSLRVAY…PPNRFAAEFL (232 aa). 51 to 58 is a binding site for ATP; the sequence is GPSGSGKT.

Belongs to the ABC transporter superfamily. 2-aminoethylphosphonate importer (TC 3.A.1.11.5) family.

It is found in the cell inner membrane. Functionally, probably part of the PhnSTUV complex (TC 3.A.1.11.5) involved in 2-aminoethylphosphonate import. Probably responsible for energy coupling to the transport system. This chain is Putative 2-aminoethylphosphonate import ATP-binding protein PhnT (phnT), found in Salmonella paratyphi A (strain ATCC 9150 / SARB42).